Here is a 224-residue protein sequence, read N- to C-terminus: PKHD-type hydroxylase HNE_1625 (224 aa).

In terms of domain architecture, Fe2OG dioxygenase spans 77–175 (KFAPPLISCS…RFVFVGWIQS (99 aa)). The Fe cation site is built by H95, D97, and H156. R166 provides a ligand contact to 2-oxoglutarate.

Fe(2+) serves as cofactor. Requires L-ascorbate as cofactor.

The polypeptide is PKHD-type hydroxylase HNE_1625 (Hyphomonas neptunium (strain ATCC 15444)).